The sequence spans 591 residues: Autotransporter adhesin NhhA (591 aa).

A signal peptide spans Met-1–Ala-51. Residues Asn-52–Ala-503 form a surface exposed passenger domain region. Positions Gln-504–Trp-591 are translocator domain. The next 4 beta stranded transmembrane spans lie at Gly-537 to Thr-547, Glu-551 to Ile-561, Lys-570 to Asn-576, and His-580 to Trp-591.

This sequence belongs to the autotransporter-2 (AT-2) (TC 1.B.40) family. As to quaternary structure, homotrimer.

Its subcellular location is the cell surface. It is found in the cell outer membrane. Its function is as follows. Involved in adhesion of capsulated meningococci to host epithelial cells. Interacts with laminin and heparan sulfate, promoting the adherence to the extracellular matrix (ECM) components. The protein is Autotransporter adhesin NhhA of Neisseria meningitidis serogroup B (strain ATCC BAA-335 / MC58).